Consider the following 542-residue polypeptide: Zinc finger CCHC domain-containing protein 7 (542 aa).

A disordered region spans residues 110–144 (QAQEKTQSPATPRSNKVANKCKRSNKKPEPEESPS). A compositionally biased stretch (polar residues) spans 112-126 (QEKTQSPATPRSNKV). Glycyl lysine isopeptide (Lys-Gly) (interchain with G-Cter in SUMO2) cross-links involve residues K129 and K136. S142 is subject to Phosphoserine. Residues K236 and K251 each participate in a glycyl lysine isopeptide (Lys-Gly) (interchain with G-Cter in SUMO2) cross-link. CCHC-type zinc fingers lie at residues 238–255 (VTCRNCDKRGHLSKNCPL), 260–277 (RPCCLCSERGHLQYGCPA), and 301–318 (KRCDRCDMIGHYADACPE). K336 is covalently cross-linked (Glycyl lysine isopeptide (Lys-Gly) (interchain with G-Cter in SUMO2)). The segment at 345 to 362 (VYCYNCAQKGHYGHECTE) adopts a CCHC-type 4 zinc-finger fold. Residues 396–542 (LKDIKKNGDF…RKKKPKSSGF (147 aa)) form a disordered region. Residue K410 forms a Glycyl lysine isopeptide (Lys-Gly) (interchain with G-Cter in SUMO2) linkage. Residues 412 to 421 (PHGEETDRYH) show a composition bias toward basic and acidic residues. A compositionally biased stretch (basic residues) spans 422–435 (HDRRKSRFSGKRSR). K432 participates in a covalent cross-link: Glycyl lysine isopeptide (Lys-Gly) (interchain with G-Cter in SUMO2). Residues 436–456 (WPRESKETQKEKTRGREGEKH) show a composition bias toward basic and acidic residues. K474 is covalently cross-linked (Glycyl lysine isopeptide (Lys-Gly) (interchain with G-Cter in SUMO2)). A compositionally biased stretch (low complexity) spans 474 to 489 (KPNSSSSSNSQKPSKS). 2 positions are modified to phosphoserine: S478 and S480. Residues K485 and K488 each participate in a glycyl lysine isopeptide (Lys-Gly) (interchain with G-Cter in SUMO2) cross-link. 2 stretches are compositionally biased toward basic and acidic residues: residues 499–510 (LREEKLRRESMR) and 518–528 (FVEDGSHDDLF). A Glycyl lysine isopeptide (Lys-Gly) (interchain with G-Cter in SUMO2) cross-link involves residue K531. Residues 531–542 (KQRKKKPKSSGF) are compositionally biased toward basic residues.

In terms of assembly, component of a nucleolar TRAMP-like complex, an ATP-dependent exosome regulatory complex consisting of a helicase (MTREX), an oligadenylate polymerase (TENT4B or TENT4A), and a substrate specific RNA-binding factor (ZCCHC7 or ZCCHC8). Several TRAMP-like complexes exist with specific compositions and are associated with nuclear, or nucleolar RNA exosomes.

The protein localises to the nucleus. The protein resides in the nucleolus. In Rattus norvegicus (Rat), this protein is Zinc finger CCHC domain-containing protein 7 (Zcchc7).